The sequence spans 162 residues: MTVKKLVKSTHPILNKTIQPVSTYDQKLKVLLEDLEDTLYHEEAAAISAPQIGVDQSVALIDMEQEGLLQLINPVVKSQSQETVSDLEGSISLPHIYGEVKRSKMITVQSYDINGNAVELTAYDDIARMILHMIDHLNGIQFTKRAHHILNETEVEAYFDNE.

Belongs to the polypeptide deformylase family.

This chain is Peptide deformylase-like, found in Staphylococcus epidermidis (strain ATCC 35984 / DSM 28319 / BCRC 17069 / CCUG 31568 / BM 3577 / RP62A).